A 311-amino-acid chain; its full sequence is GTP cyclohydrolase MptA (311 aa).

Belongs to the GTP cyclohydrolase IV family. Homodimer. Fe(2+) is required as a cofactor.

It carries out the reaction GTP + H2O = 7,8-dihydroneopterin 2',3'-cyclic phosphate + formate + diphosphate + H(+). Its pathway is cofactor biosynthesis; 5,6,7,8-tetrahydromethanopterin biosynthesis. Its function is as follows. Converts GTP to 7,8-dihydro-D-neopterin 2',3'-cyclic phosphate, the first intermediate in the biosynthesis of coenzyme methanopterin. This is GTP cyclohydrolase MptA from Methanobrevibacter smithii (strain ATCC 35061 / DSM 861 / OCM 144 / PS).